We begin with the raw amino-acid sequence, 287 residues long: Pantothenate synthetase (287 aa).

30–37 (MGNLHSGH) is a binding site for ATP. Histidine 37 acts as the Proton donor in catalysis. Glutamine 61 provides a ligand contact to (R)-pantoate. Position 61 (glutamine 61) interacts with beta-alanine. Position 149–152 (149–152 (GEKD)) interacts with ATP. A (R)-pantoate-binding site is contributed by glutamine 155. Residues valine 178 and 186 to 189 (LSSR) each bind ATP.

It belongs to the pantothenate synthetase family. Homodimer.

The protein resides in the cytoplasm. The catalysed reaction is (R)-pantoate + beta-alanine + ATP = (R)-pantothenate + AMP + diphosphate + H(+). The protein operates within cofactor biosynthesis; (R)-pantothenate biosynthesis; (R)-pantothenate from (R)-pantoate and beta-alanine: step 1/1. Catalyzes the condensation of pantoate with beta-alanine in an ATP-dependent reaction via a pantoyl-adenylate intermediate. The chain is Pantothenate synthetase from Pseudomonas putida (strain GB-1).